We begin with the raw amino-acid sequence, 71 residues long: ATP synthase F(0) complex subunit e, mitochondrial (71 aa).

Lysine 34 carries the N6-acetyllysine modification. The residue at position 68 (serine 68) is a Phosphoserine.

It belongs to the ATPase e subunit family. Component of the ATP synthase complex composed at least of ATP5F1A/subunit alpha, ATP5F1B/subunit beta, ATP5MC1/subunit c (homooctomer), MT-ATP6/subunit a, MT-ATP8/subunit 8, ATP5ME/subunit e, ATP5MF/subunit f, ATP5MG/subunit g, ATP5MK/subunit k, ATP5MJ/subunit j, ATP5F1C/subunit gamma, ATP5F1D/subunit delta, ATP5F1E/subunit epsilon, ATP5PF/subunit F6, ATP5PB/subunit b, ATP5PD/subunit d, ATP5PO/subunit OSCP. ATP synthase complex consists of a soluble F(1) head domain (subunits alpha(3) and beta(3)) - the catalytic core - and a membrane F(0) domain - the membrane proton channel (subunits c, a, 8, e, f, g, k and j). These two domains are linked by a central stalk (subunits gamma, delta, and epsilon) rotating inside the F1 region and a stationary peripheral stalk (subunits F6, b, d, and OSCP).

The protein resides in the mitochondrion. The protein localises to the mitochondrion inner membrane. Its function is as follows. Subunit e, of the mitochondrial membrane ATP synthase complex (F(1)F(0) ATP synthase or Complex V) that produces ATP from ADP in the presence of a proton gradient across the membrane which is generated by electron transport complexes of the respiratory chain. ATP synthase complex consist of a soluble F(1) head domain - the catalytic core - and a membrane F(1) domain - the membrane proton channel. These two domains are linked by a central stalk rotating inside the F(1) region and a stationary peripheral stalk. During catalysis, ATP synthesis in the catalytic domain of F(1) is coupled via a rotary mechanism of the central stalk subunits to proton translocation. In vivo, can only synthesize ATP although its ATP hydrolase activity can be activated artificially in vitro. Part of the complex F(0) domain. This chain is ATP synthase F(0) complex subunit e, mitochondrial, found in Pongo abelii (Sumatran orangutan).